The primary structure comprises 308 residues: D-alanine--D-alanine ligase B (308 aa).

An ATP-grasp domain is found at Lys-102–Glu-302. ATP is bound at residue Pro-128–Thr-183. 3 residues coordinate Mg(2+): Asp-252, Glu-269, and Asn-271.

It belongs to the D-alanine--D-alanine ligase family. Mg(2+) is required as a cofactor. Requires Mn(2+) as cofactor.

The protein resides in the cytoplasm. The catalysed reaction is 2 D-alanine + ATP = D-alanyl-D-alanine + ADP + phosphate + H(+). Its pathway is cell wall biogenesis; peptidoglycan biosynthesis. Functionally, cell wall formation. The protein is D-alanine--D-alanine ligase B of Brucella suis biovar 1 (strain 1330).